The sequence spans 334 residues: Tryptophan--tRNA ligase (334 aa).

ATP is bound by residues 12–14 (QPS) and 20–21 (GN). Positions 13 to 21 (PSGIPTLGN) match the 'HIGH' region motif. Asp136 is a binding site for L-tryptophan. ATP is bound by residues 148-150 (GKD), Ile187, and 196-200 (KMSKS). Positions 196–200 (KMSKS) match the 'KMSKS' region motif.

This sequence belongs to the class-I aminoacyl-tRNA synthetase family. Homodimer.

It is found in the cytoplasm. It catalyses the reaction tRNA(Trp) + L-tryptophan + ATP = L-tryptophyl-tRNA(Trp) + AMP + diphosphate + H(+). In terms of biological role, catalyzes the attachment of tryptophan to tRNA(Trp). The protein is Tryptophan--tRNA ligase of Wigglesworthia glossinidia brevipalpis.